We begin with the raw amino-acid sequence, 177 residues long: ATP synthase subunit delta (177 aa).

It belongs to the ATPase delta chain family. F-type ATPases have 2 components, F(1) - the catalytic core - and F(0) - the membrane proton channel. F(1) has five subunits: alpha(3), beta(3), gamma(1), delta(1), epsilon(1). F(0) has three main subunits: a(1), b(2) and c(10-14). The alpha and beta chains form an alternating ring which encloses part of the gamma chain. F(1) is attached to F(0) by a central stalk formed by the gamma and epsilon chains, while a peripheral stalk is formed by the delta and b chains.

It is found in the cell inner membrane. Its function is as follows. F(1)F(0) ATP synthase produces ATP from ADP in the presence of a proton or sodium gradient. F-type ATPases consist of two structural domains, F(1) containing the extramembraneous catalytic core and F(0) containing the membrane proton channel, linked together by a central stalk and a peripheral stalk. During catalysis, ATP synthesis in the catalytic domain of F(1) is coupled via a rotary mechanism of the central stalk subunits to proton translocation. Functionally, this protein is part of the stalk that links CF(0) to CF(1). It either transmits conformational changes from CF(0) to CF(1) or is implicated in proton conduction. The chain is ATP synthase subunit delta from Flavobacterium psychrophilum (strain ATCC 49511 / DSM 21280 / CIP 103535 / JIP02/86).